A 188-amino-acid polypeptide reads, in one-letter code: Pyridoxal 5'-phosphate synthase subunit PdxT (188 aa).

47-49 (GES) contacts L-glutamine. Cysteine 79 serves as the catalytic Nucleophile. Residues arginine 105 and 134 to 135 (IR) each bind L-glutamine. Residues histidine 170 and glutamate 172 each act as charge relay system in the active site.

Belongs to the glutaminase PdxT/SNO family. In terms of assembly, in the presence of PdxS, forms a dodecamer of heterodimers. Only shows activity in the heterodimer.

It carries out the reaction aldehydo-D-ribose 5-phosphate + D-glyceraldehyde 3-phosphate + L-glutamine = pyridoxal 5'-phosphate + L-glutamate + phosphate + 3 H2O + H(+). It catalyses the reaction L-glutamine + H2O = L-glutamate + NH4(+). The protein operates within cofactor biosynthesis; pyridoxal 5'-phosphate biosynthesis. In terms of biological role, catalyzes the hydrolysis of glutamine to glutamate and ammonia as part of the biosynthesis of pyridoxal 5'-phosphate. The resulting ammonia molecule is channeled to the active site of PdxS. The protein is Pyridoxal 5'-phosphate synthase subunit PdxT of Listeria monocytogenes serotype 4a (strain HCC23).